Here is a 219-residue protein sequence, read N- to C-terminus: HTH-type transcriptional regulator LutR (219 aa).

An HTH gntR-type domain is found at 1–56 (MIKNGELKPGDKLDSVQALAESFQVSRSAVREALSALKAMGLVEMKQGEGTYLKEF). The H-T-H motif DNA-binding region spans 16–35 (VQALAESFQVSRSAVREALS).

Functionally, negatively regulates the transcription of the lutABC operon, which is required for L-lactate utilization. LutR activity is regulated by lactate, since presence of L-lactate, that probably binds to LutR, leads to derepression of the operon. Also appears to be essential for bacilysin biosynthesis. This is HTH-type transcriptional regulator LutR (lutR) from Bacillus subtilis (strain 168).